A 120-amino-acid chain; its full sequence is Ribonuclease P protein component (120 aa).

It belongs to the RnpA family. Consists of a catalytic RNA component (M1 or rnpB) and a protein subunit.

It carries out the reaction Endonucleolytic cleavage of RNA, removing 5'-extranucleotides from tRNA precursor.. RNaseP catalyzes the removal of the 5'-leader sequence from pre-tRNA to produce the mature 5'-terminus. It can also cleave other RNA substrates such as 4.5S RNA. The protein component plays an auxiliary but essential role in vivo by binding to the 5'-leader sequence and broadening the substrate specificity of the ribozyme. This chain is Ribonuclease P protein component, found in Blochmanniella floridana.